Here is a 452-residue protein sequence, read N- to C-terminus: RNA polymerase II-associated protein rba50 (452 aa).

Disordered stretches follow at residues 60–83 (LRKN…IDEE), 125–202 (EREL…QTKR), and 223–261 (PIKG…PLEF). The segment covering 125 to 135 (ERELAQRKDRS) has biased composition (basic and acidic residues). Positions 136–154 (SQVNTPDLSQRPSDDSFLS) are enriched in polar residues. The span at 156-165 (EKLRSSEKLN) shows a compositional bias: basic and acidic residues. Residues 170–191 (SVLSSEAVDSSSGSPSPPMALS) are compositionally biased toward low complexity.

The protein belongs to the RPAP1 family. As to quaternary structure, interacts with RNA polymerase II.

The protein resides in the cytoplasm. The protein localises to the nucleus. Functionally, forms an interface between the RNA polymerase II enzyme and chaperone/scaffolding proteins, suggesting that it is required to connect RNA polymerase II to regulators of protein complex formation. The polypeptide is RNA polymerase II-associated protein rba50 (rba50) (Schizosaccharomyces pombe (strain 972 / ATCC 24843) (Fission yeast)).